The following is a 156-amino-acid chain: Cyanate hydratase (156 aa).

Active-site residues include R96, E99, and S122.

This sequence belongs to the cyanase family.

The enzyme catalyses cyanate + hydrogencarbonate + 3 H(+) = NH4(+) + 2 CO2. Its function is as follows. Catalyzes the reaction of cyanate with bicarbonate to produce ammonia and carbon dioxide. This chain is Cyanate hydratase, found in Burkholderia mallei (strain NCTC 10247).